The following is a 451-amino-acid chain: Trigger factor (451 aa).

Positions 165-250 (DDKLTIDFEG…LHQIQAREAL (86 aa)) constitute a PPIase FKBP-type domain.

This sequence belongs to the FKBP-type PPIase family. Tig subfamily.

The protein resides in the cytoplasm. The catalysed reaction is [protein]-peptidylproline (omega=180) = [protein]-peptidylproline (omega=0). Its function is as follows. Involved in protein export. Acts as a chaperone by maintaining the newly synthesized protein in an open conformation. Functions as a peptidyl-prolyl cis-trans isomerase. In Helicobacter pylori (strain HPAG1), this protein is Trigger factor.